Consider the following 664-residue polypeptide: Sulfoquinovosidase (664 aa).

Positions 135, 270, 283, 284, and 286 each coordinate 3-(6-sulfo-alpha-D-quinovosyl)glycerol. Asp388 (nucleophile) is an active-site residue. Glu391 is a catalytic residue. Residue Arg438 coordinates 3-(6-sulfo-alpha-D-quinovosyl)glycerol. Asp455 acts as the Proton donor in catalysis. His520 lines the 3-(6-sulfo-alpha-D-quinovosyl)glycerol pocket.

Belongs to the glycosyl hydrolase 31 family.

It catalyses the reaction 3-(6-sulfo-alpha-D-quinovosyl)glycerol + H2O = 6-sulfo-alpha-D-quinovose + glycerol. In terms of biological role, part of the sulfoquinovose monooxygenase (sulfo-SMO) pathway, a D-sulfoquinovose degradation pathway that enables the complete utilization of all carbons within sulfoquinovose (SQ) with concomitant production of inorganic sulfite. Catalyzes the first step of the pathway, the hydrolysis of sulfoquinovosyl glycerol (SQGro) to release sulfoquinovose (SQ). Hydrolyzes both epimers of SQGro, with a preference for the natural 2'R isomer. In vitro, can use the substrate analog para-nitrophenyl alpha-sulfoquinovoside (PNPSQ), but shows no detectable activity toward 4-nitrophenyl alpha-D-glucopyranoside (PNPGlc). This is Sulfoquinovosidase from Agrobacterium fabrum (strain C58 / ATCC 33970) (Agrobacterium tumefaciens (strain C58)).